Here is a 347-residue protein sequence, read N- to C-terminus: Chlorophyll a/b light-harvesting protein PcbB (347 aa).

6 helical membrane passes run 25–45, 64–84, 91–111, 206–226, 247–267, and 308–328; these read GLWL…AGAI, LILI…GVVV, AIGA…IFHV, LASG…WHIT, LSSA…FSAV, and LCNV…WHAI.

This sequence belongs to the PsbB/PsbC family. IsiA/Pcb subfamily. In terms of assembly, the antenna complex consists of chlorophylls (a and b) and chlorophyll a/b binding proteins. Requires chlorophyll a as cofactor. The cofactor is chlorophyll b.

It localises to the cellular thylakoid membrane. Functionally, the antenna complex functions as a light receptor, it captures and delivers excitation energy to photosystems II and I. The Prochlorales pcb genes are not related to higher plant LHCs. This Prochlorothrix hollandica protein is Chlorophyll a/b light-harvesting protein PcbB (pcbB).